A 169-amino-acid polypeptide reads, in one-letter code: Peptide deformylase (169 aa).

Cysteine 91 and histidine 133 together coordinate Fe cation. The active site involves glutamate 134. Histidine 137 provides a ligand contact to Fe cation.

This sequence belongs to the polypeptide deformylase family. Fe(2+) is required as a cofactor.

It catalyses the reaction N-terminal N-formyl-L-methionyl-[peptide] + H2O = N-terminal L-methionyl-[peptide] + formate. Its function is as follows. Removes the formyl group from the N-terminal Met of newly synthesized proteins. Requires at least a dipeptide for an efficient rate of reaction. N-terminal L-methionine is a prerequisite for activity but the enzyme has broad specificity at other positions. The protein is Peptide deformylase of Haemophilus influenzae (strain ATCC 51907 / DSM 11121 / KW20 / Rd).